A 439-amino-acid polypeptide reads, in one-letter code: Enolase 2 (439 aa).

Positions 160 and 169 each coordinate substrate. The active-site Proton donor is E212. D247, E296, and D323 together coordinate Mg(2+). Substrate-binding residues include E296 and D323. Catalysis depends on K348, which acts as the Proton acceptor. Residues 375-378 and K399 each bind substrate; that span reads SHRS.

Belongs to the enolase family. In terms of assembly, homodimer. It depends on Mg(2+) as a cofactor.

The protein resides in the cytoplasm. The catalysed reaction is (2R)-2-phosphoglycerate = phosphoenolpyruvate + H2O. It participates in carbohydrate degradation; glycolysis; pyruvate from D-glyceraldehyde 3-phosphate: step 4/5. This chain is Enolase 2 (ENO2), found in Debaryomyces hansenii (strain ATCC 36239 / CBS 767 / BCRC 21394 / JCM 1990 / NBRC 0083 / IGC 2968) (Yeast).